Reading from the N-terminus, the 88-residue chain is U18-hexatoxin-Hi1a (88 aa).

The signal sequence occupies residues 1–17 (MRIYSLLILSFLLLASA). A propeptide spanning residues 18–47 (VLINSAEMPRSEKSLLYSIMQGREDSEEGR) is cleaved from the precursor. 4 disulfides stabilise this stretch: Cys48–Cys63, Cys55–Cys69, Cys62–Cys81, and Cys71–Cys79.

This sequence belongs to the neurotoxin 07 (Beta/delta-agtx) family. 02 (aga-3) subfamily. Expressed by the venom gland.

It localises to the secreted. In terms of biological role, weak insecticidal toxin with probable ion channel impairing activity. In vivo, induces paralysis when injected into sheep blowflies (L.cuprina). Shows weak toxicity, since it is only toxic at high doses, and flies recover within 24 hours. This chain is U18-hexatoxin-Hi1a, found in Hadronyche infensa (Fraser island funnel-web spider).